The chain runs to 513 residues: Na(+)/H(+) antiporter NhaB (513 aa).

Helical transmembrane passes span 23-43 (LALI…PFVA), 52-72 (IFTL…LLAI), 97-117 (LLLM…LFIF), 144-164 (FLDA…FYGI), 202-222 (LMMH…VGEP), 238-258 (FFLR…LTCL), 303-323 (AIIG…VGLI), 348-368 (TESL…AVII), 391-411 (LFYI…VGTI), 447-467 (ATPN…APLI), and 475-495 (VWMA…CVEF).

The protein belongs to the NhaB Na(+)/H(+) (TC 2.A.34) antiporter family.

The protein localises to the cell inner membrane. It carries out the reaction 2 Na(+)(in) + 3 H(+)(out) = 2 Na(+)(out) + 3 H(+)(in). Its function is as follows. Na(+)/H(+) antiporter that extrudes sodium in exchange for external protons. The polypeptide is Na(+)/H(+) antiporter NhaB (Escherichia coli (strain SMS-3-5 / SECEC)).